Consider the following 90-residue polypeptide: Trp-8 progonadoliberin (90 aa).

The first 24 residues, 1–24 (MSRHVTVVLLLAVVLLLSSHMSHG), serve as a signal peptide directing secretion. Gln25 carries the pyrrolidone carboxylic acid modification. Gly34 carries the glycine amide modification.

Belongs to the GnRH family. As to expression, expressed in forebrain but not in testis, ovary, kidney and liver.

It localises to the secreted. Its function is as follows. Stimulates the secretion of gonadotropins. The polypeptide is Trp-8 progonadoliberin (Rana dybowskii (Dybovsky's frog)).